The primary structure comprises 290 residues: MPSCLDYAFAAAFHGTDLPGGRFWRPRACAPVFVWSEVACAVALSARIFFEARERLAAMPIGEGRPPYGRGTELYHAARRTVSSAARLWDALVALAASAAEEICVMAWGKLEPMPYLWDTRDATKIPVLGPKLMALFSAVADGATAIATEARNSLVGEAGHHHNTLPRQPPSMDMPVQARLSLMLGMEIVRCILALALPSASFNIPDDATESIEESVRIFGARLSLALAKDPIPDPVGKFEEEETYYLRCLRSIYEIENILSLAPRRQRLRDVPQTPNSPMCLPTVAPMC.

This is an uncharacterized protein from Psittacid herpesvirus 1 (isolate Amazon parrot/-/97-0001/1997) (PsHV-1).